Here is a 246-residue protein sequence, read N- to C-terminus: ATP synthase subunit b 1 (246 aa).

The helical transmembrane segment at 5 to 27 (WFTFTAQVINFLVLVGLLRYFLY) threads the bilayer.

It belongs to the ATPase B chain family. F-type ATPases have 2 components, F(1) - the catalytic core - and F(0) - the membrane proton channel. F(1) has five subunits: alpha(3), beta(3), gamma(1), delta(1), epsilon(1). F(0) has three main subunits: a(1), b(2) and c(10-14). The alpha and beta chains form an alternating ring which encloses part of the gamma chain. F(1) is attached to F(0) by a central stalk formed by the gamma and epsilon chains, while a peripheral stalk is formed by the delta and b chains.

The protein resides in the cell inner membrane. F(1)F(0) ATP synthase produces ATP from ADP in the presence of a proton or sodium gradient. F-type ATPases consist of two structural domains, F(1) containing the extramembraneous catalytic core and F(0) containing the membrane proton channel, linked together by a central stalk and a peripheral stalk. During catalysis, ATP synthesis in the catalytic domain of F(1) is coupled via a rotary mechanism of the central stalk subunits to proton translocation. In terms of biological role, component of the F(0) channel, it forms part of the peripheral stalk, linking F(1) to F(0). The chain is ATP synthase subunit b 1 from Rhodopirellula baltica (strain DSM 10527 / NCIMB 13988 / SH1).